The chain runs to 35 residues: Unknown protein 14 from 2D-PAGE (35 aa).

The segment at 1–35 (VVXXQTLXDXRGIYGDQGSIGPXXIXGLQGDRDAD) is disordered.

The sequence is that of Unknown protein 14 from 2D-PAGE from Bombyx mori (Silk moth).